A 293-amino-acid polypeptide reads, in one-letter code: 33 kDa chaperonin (293 aa).

Cystine bridges form between cysteine 236–cysteine 238 and cysteine 269–cysteine 272.

This sequence belongs to the HSP33 family. In terms of processing, under oxidizing conditions two disulfide bonds are formed involving the reactive cysteines. Under reducing conditions zinc is bound to the reactive cysteines and the protein is inactive.

The protein resides in the cytoplasm. In terms of biological role, redox regulated molecular chaperone. Protects both thermally unfolding and oxidatively damaged proteins from irreversible aggregation. Plays an important role in the bacterial defense system toward oxidative stress. This chain is 33 kDa chaperonin, found in Lactobacillus delbrueckii subsp. bulgaricus (strain ATCC 11842 / DSM 20081 / BCRC 10696 / JCM 1002 / NBRC 13953 / NCIMB 11778 / NCTC 12712 / WDCM 00102 / Lb 14).